Consider the following 232-residue polypeptide: Orotidine 5'-phosphate decarboxylase (232 aa).

Substrate contacts are provided by residues aspartate 13, lysine 35, 62 to 71, threonine 121, arginine 182, glutamine 191, glycine 211, and arginine 212; that span reads DLKFHDIPNT. Lysine 64 functions as the Proton donor in the catalytic mechanism.

Belongs to the OMP decarboxylase family. Type 1 subfamily. Homodimer.

The enzyme catalyses orotidine 5'-phosphate + H(+) = UMP + CO2. It participates in pyrimidine metabolism; UMP biosynthesis via de novo pathway; UMP from orotate: step 2/2. Functionally, catalyzes the decarboxylation of orotidine 5'-monophosphate (OMP) to uridine 5'-monophosphate (UMP). The polypeptide is Orotidine 5'-phosphate decarboxylase (Acinetobacter baumannii (strain AB0057)).